Consider the following 468-residue polypeptide: F-box/LRR-repeat protein At4g14096 (468 aa).

One can recognise an F-box domain in the interval 7 to 60 (RDIISSLPEAISCHILSFLPTKEAASTSVLSKKWRYLFAFVPNLDLDESVYLNP). 6 LRR repeats span residues 114–136 (VSDLDLHVYMETEFVFPSEMFLS), 138–167 (TLVRLKLMLYPLLEFEDVYLPKLKTLYIDS), 169–194 (YFEKYGIGLTKLLSGCPILEDLVLDD), 216–241 (STQVRDEFPKSVSIDTPNLVYLKFTD), 292–323 (TLYLSSNTLQVLTYSCDAIPIFNNLTHLTIES), and 324–349 (NPEVGWQSLPGLLKNSPNLETLIFQG).

This chain is F-box/LRR-repeat protein At4g14096, found in Arabidopsis thaliana (Mouse-ear cress).